Consider the following 282-residue polypeptide: Elongation factor Ts (282 aa).

The interval 80–83 (TDFV) is involved in Mg(2+) ion dislocation from EF-Tu.

It belongs to the EF-Ts family.

The protein localises to the cytoplasm. Functionally, associates with the EF-Tu.GDP complex and induces the exchange of GDP to GTP. It remains bound to the aminoacyl-tRNA.EF-Tu.GTP complex up to the GTP hydrolysis stage on the ribosome. The protein is Elongation factor Ts of Aliivibrio salmonicida (strain LFI1238) (Vibrio salmonicida (strain LFI1238)).